The primary structure comprises 241 residues: Urease accessory protein UreF (241 aa).

It belongs to the UreF family. In terms of assembly, ureD, UreF and UreG form a complex that acts as a GTP-hydrolysis-dependent molecular chaperone, activating the urease apoprotein by helping to assemble the nickel containing metallocenter of UreC. The UreE protein probably delivers the nickel.

It is found in the cytoplasm. Required for maturation of urease via the functional incorporation of the urease nickel metallocenter. This is Urease accessory protein UreF from Rhodopseudomonas palustris (strain BisB18).